The sequence spans 328 residues: Malate dehydrogenase (328 aa).

Gly-11–Gly-17 contributes to the NAD(+) binding site. Substrate is bound by residues Arg-94 and Arg-100. Residues Asn-107, Gln-114, and Val-131–Asn-133 contribute to the NAD(+) site. Substrate is bound by residues Asn-133 and Arg-164. His-189 acts as the Proton acceptor in catalysis.

This sequence belongs to the LDH/MDH superfamily. MDH type 2 family.

The enzyme catalyses (S)-malate + NAD(+) = oxaloacetate + NADH + H(+). Functionally, catalyzes the reversible oxidation of malate to oxaloacetate. This chain is Malate dehydrogenase, found in Acinetobacter baumannii (strain SDF).